A 249-amino-acid polypeptide reads, in one-letter code: Leucyl/phenylalanyl-tRNA--protein transferase (249 aa).

It belongs to the L/F-transferase family.

Its subcellular location is the cytoplasm. It catalyses the reaction N-terminal L-lysyl-[protein] + L-leucyl-tRNA(Leu) = N-terminal L-leucyl-L-lysyl-[protein] + tRNA(Leu) + H(+). The catalysed reaction is N-terminal L-arginyl-[protein] + L-leucyl-tRNA(Leu) = N-terminal L-leucyl-L-arginyl-[protein] + tRNA(Leu) + H(+). The enzyme catalyses L-phenylalanyl-tRNA(Phe) + an N-terminal L-alpha-aminoacyl-[protein] = an N-terminal L-phenylalanyl-L-alpha-aminoacyl-[protein] + tRNA(Phe). Functionally, functions in the N-end rule pathway of protein degradation where it conjugates Leu, Phe and, less efficiently, Met from aminoacyl-tRNAs to the N-termini of proteins containing an N-terminal arginine or lysine. This Cupriavidus metallidurans (strain ATCC 43123 / DSM 2839 / NBRC 102507 / CH34) (Ralstonia metallidurans) protein is Leucyl/phenylalanyl-tRNA--protein transferase.